Consider the following 306-residue polypeptide: L-lactate dehydrogenase (306 aa).

NAD(+) contacts are provided by residues Val11, Asp32, Lys37, and 76 to 77 (GA). Residues Gln79 and Arg85 each contribute to the substrate site. NAD(+) is bound by residues Ser98, 115–117 (VSN), and Ser140. Residue 117-120 (NPVD) participates in substrate binding. 145–148 (DTAR) lines the substrate pocket. Arg150 and His165 together coordinate beta-D-fructose 1,6-bisphosphate. His172 acts as the Proton acceptor in catalysis. A Phosphotyrosine modification is found at Tyr214. Substrate is bound at residue Thr223.

Belongs to the LDH/MDH superfamily. LDH family. As to quaternary structure, homotetramer.

The protein resides in the cytoplasm. It catalyses the reaction (S)-lactate + NAD(+) = pyruvate + NADH + H(+). The protein operates within fermentation; pyruvate fermentation to lactate; (S)-lactate from pyruvate: step 1/1. With respect to regulation, allosterically activated by fructose 1,6-bisphosphate (FBP). Catalyzes the conversion of lactate to pyruvate. This Synechococcus sp. (strain JA-3-3Ab) (Cyanobacteria bacterium Yellowstone A-Prime) protein is L-lactate dehydrogenase.